Consider the following 414-residue polypeptide: DNA primase small subunit PriS (414 aa).

Residues aspartate 98, aspartate 100, and aspartate 312 contribute to the active site.

Belongs to the eukaryotic-type primase small subunit family. In terms of assembly, heterodimer of a small subunit (PriS) and a large subunit (PriL). It depends on Mg(2+) as a cofactor. Mn(2+) serves as cofactor.

Catalytic subunit of DNA primase, an RNA polymerase that catalyzes the synthesis of short RNA molecules used as primers for DNA polymerase during DNA replication. The small subunit contains the primase catalytic core and has DNA synthesis activity on its own. Binding to the large subunit stabilizes and modulates the activity, increasing the rate of DNA synthesis while decreasing the length of the DNA fragments, and conferring RNA synthesis capability. The DNA polymerase activity may enable DNA primase to also catalyze primer extension after primer synthesis. May also play a role in DNA repair. This Methanosarcina acetivorans (strain ATCC 35395 / DSM 2834 / JCM 12185 / C2A) protein is DNA primase small subunit PriS.